Here is a 469-residue protein sequence, read N- to C-terminus: MSAPRTLYDKIWDDHLVDEQPDGTCLLYIDRHLVHEVTSPQAFEGLRMTGRKVRAPEKTLAVVDHNVPTSPDRHLGIKNEESRIQVEALATNAAEFGVEYYSASDKRQGIVHIVGPEQGFTLPGMTIVCGDSHTSTHGAFGALAHGIGTSEVEHVLATQTLIQKKAKNMLVRVDGLLPPHVTAKDIILAIIGEIGTAGGTGHVIEFAGEAIRSLSMEGRMTICNMTIEGGARAGLIAPDEKTFEYIKGKPRAPKGEALEQAIAYWKTLQTDEGAHYDRVVVLDAASLPPIVSWGSSPEDVISVQGIVPNPDDIQDETKRTSKWRALDYMGLKPGTKMTDITLDRVFIGSCTNGRIEDLREVAKVVEGKTVASTVDAMIVPGSGLVKEQAEAEGLDKIFKAAGFDWREPGCSMCLAMNDDRLKPGERCASTSNRNFEGRQGFKGRTHLVSPAMAAAAAIAGHFVDIREWN.

Positions 350, 410, and 413 each coordinate [4Fe-4S] cluster.

It belongs to the aconitase/IPM isomerase family. LeuC type 1 subfamily. As to quaternary structure, heterodimer of LeuC and LeuD. [4Fe-4S] cluster is required as a cofactor.

The catalysed reaction is (2R,3S)-3-isopropylmalate = (2S)-2-isopropylmalate. The protein operates within amino-acid biosynthesis; L-leucine biosynthesis; L-leucine from 3-methyl-2-oxobutanoate: step 2/4. Catalyzes the isomerization between 2-isopropylmalate and 3-isopropylmalate, via the formation of 2-isopropylmaleate. The chain is 3-isopropylmalate dehydratase large subunit from Rhizobium leguminosarum bv. trifolii (strain WSM2304).